We begin with the raw amino-acid sequence, 310 residues long: MARTNESSPYVEFDRKQWRTLRKSTPLVLTEDELYGLRGLGEQIDLEEVAEVYLPLARLIHLQVAARQRLFAATATFLGEKHPDRQVPFVIGVAGSVAVGKSTTARVLQALLARWDHHPRVDLVTTDGFLYPTRELQRRGIMHRKGFPESYDRRKLLRFVTEVKSGAEEVAAPVYSHTSYDIIPGQYHLIRQPDILIIEGLNVLQTGPRLMVSDLFDFSIYVDARIEDIEAWYIQRFLALRNTSFADPNAHFHHYSGLSDRDATIAAKEIWNSINHPNLVENILPTRPRATLVLRKDADHTINRLRLRKL.

95-102 (GSVAVGKS) provides a ligand contact to ATP.

The protein belongs to the prokaryotic pantothenate kinase family.

It localises to the cytoplasm. It carries out the reaction (R)-pantothenate + ATP = (R)-4'-phosphopantothenate + ADP + H(+). It participates in cofactor biosynthesis; coenzyme A biosynthesis; CoA from (R)-pantothenate: step 1/5. In Rhodococcus erythropolis (strain PR4 / NBRC 100887), this protein is Pantothenate kinase.